The following is a 293-amino-acid chain: EID1-like F-box protein 1 (293 aa).

An F-box domain is found at 16–68 (QCTKGHLNEDVLLLVFQHLNWNPKLVATLSCVCRWFDDFAKRVLWKEFCKTRA). The tract at residues 245–293 (AIPSEDNNHTEKKQDNGFPRENVLKRRNSLLGGSENGPPPQKRLTNPNQ) is disordered. Positions 250 to 259 (DNNHTEKKQD) are enriched in basic and acidic residues.

In Arabidopsis thaliana (Mouse-ear cress), this protein is EID1-like F-box protein 1 (EDL1).